The primary structure comprises 402 residues: CCA-adding enzyme (402 aa).

ATP-binding residues include Gly-32 and Arg-35. CTP is bound by residues Gly-32 and Arg-35. Residues Asp-45 and Asp-47 each contribute to the Mg(2+) site. Arg-116, Asp-159, Arg-162, Arg-165, and Arg-168 together coordinate ATP. Residues Arg-116, Asp-159, Arg-162, Arg-165, and Arg-168 each coordinate CTP.

The protein belongs to the tRNA nucleotidyltransferase/poly(A) polymerase family. Bacterial CCA-adding enzyme type 3 subfamily. Homodimer. The cofactor is Mg(2+).

It carries out the reaction a tRNA precursor + 2 CTP + ATP = a tRNA with a 3' CCA end + 3 diphosphate. It catalyses the reaction a tRNA with a 3' CCA end + 2 CTP + ATP = a tRNA with a 3' CCACCA end + 3 diphosphate. Catalyzes the addition and repair of the essential 3'-terminal CCA sequence in tRNAs without using a nucleic acid template. Adds these three nucleotides in the order of C, C, and A to the tRNA nucleotide-73, using CTP and ATP as substrates and producing inorganic pyrophosphate. tRNA 3'-terminal CCA addition is required both for tRNA processing and repair. Also involved in tRNA surveillance by mediating tandem CCA addition to generate a CCACCA at the 3' terminus of unstable tRNAs. While stable tRNAs receive only 3'-terminal CCA, unstable tRNAs are marked with CCACCA and rapidly degraded. This chain is CCA-adding enzyme, found in Streptococcus thermophilus (strain CNRZ 1066).